A 214-amino-acid polypeptide reads, in one-letter code: Probable nicotinate-nucleotide adenylyltransferase (214 aa).

The protein belongs to the NadD family.

It catalyses the reaction nicotinate beta-D-ribonucleotide + ATP + H(+) = deamido-NAD(+) + diphosphate. Its pathway is cofactor biosynthesis; NAD(+) biosynthesis; deamido-NAD(+) from nicotinate D-ribonucleotide: step 1/1. Its function is as follows. Catalyzes the reversible adenylation of nicotinate mononucleotide (NaMN) to nicotinic acid adenine dinucleotide (NaAD). This chain is Probable nicotinate-nucleotide adenylyltransferase, found in Mycolicibacterium vanbaalenii (strain DSM 7251 / JCM 13017 / BCRC 16820 / KCTC 9966 / NRRL B-24157 / PYR-1) (Mycobacterium vanbaalenii).